We begin with the raw amino-acid sequence, 277 residues long: Phosphatidylglycerol--prolipoprotein diacylglyceryl transferase (277 aa).

The next 4 membrane-spanning stretches (helical) occupy residues 22 to 42 (WYGV…LSEA), 51 to 71 (IIVD…RIYY), 89 to 109 (IWHG…TAII), and 116 to 136 (ISFW…QAIG). R137 contributes to the a 1,2-diacyl-sn-glycero-3-phospho-(1'-sn-glycerol) binding site. A run of 3 helical transmembrane segments spans residues 177 to 197 (QPTF…LLII), 205 to 225 (GELF…IEGM), and 235 to 255 (FRVS…LIIY).

This sequence belongs to the Lgt family.

It is found in the cell membrane. The catalysed reaction is L-cysteinyl-[prolipoprotein] + a 1,2-diacyl-sn-glycero-3-phospho-(1'-sn-glycerol) = an S-1,2-diacyl-sn-glyceryl-L-cysteinyl-[prolipoprotein] + sn-glycerol 1-phosphate + H(+). It functions in the pathway protein modification; lipoprotein biosynthesis (diacylglyceryl transfer). Its function is as follows. Catalyzes the transfer of the diacylglyceryl group from phosphatidylglycerol to the sulfhydryl group of the N-terminal cysteine of a prolipoprotein, the first step in the formation of mature lipoproteins. The polypeptide is Phosphatidylglycerol--prolipoprotein diacylglyceryl transferase (Listeria welshimeri serovar 6b (strain ATCC 35897 / DSM 20650 / CCUG 15529 / CIP 8149 / NCTC 11857 / SLCC 5334 / V8)).